The primary structure comprises 85 residues: MNYLVFFSLALLLMTGVESVRDGYIADDKNCAYFCGRNAYCDDECKKKGAESGYCQWAGVYGNACWCYKLPDKVPIRVPGKCNGG.

An N-terminal signal peptide occupies residues 1 to 19; the sequence is MNYLVFFSLALLLMTGVES. Residues 21–83 form the LCN-type CS-alpha/beta domain; the sequence is RDGYIADDKN…VPIRVPGKCN (63 aa). 4 disulfide bridges follow: Cys-31-Cys-82, Cys-35-Cys-55, Cys-41-Cys-65, and Cys-45-Cys-67.

Belongs to the long (4 C-C) scorpion toxin superfamily. Sodium channel inhibitor family. Alpha subfamily. As to expression, expressed by the venom gland.

The protein localises to the secreted. Functionally, alpha toxins bind voltage-independently at site-3 of sodium channels (Nav) and inhibit the inactivation of the activated channels, thereby blocking neuronal transmission. The protein is Toxin BmKa3 of Olivierus martensii (Manchurian scorpion).